The sequence spans 92 residues: Small ribosomal subunit protein uS19 (92 aa).

This sequence belongs to the universal ribosomal protein uS19 family.

Protein S19 forms a complex with S13 that binds strongly to the 16S ribosomal RNA. This is Small ribosomal subunit protein uS19 from Roseobacter denitrificans (strain ATCC 33942 / OCh 114) (Erythrobacter sp. (strain OCh 114)).